The following is a 230-amino-acid chain: Flavin-dependent thymidylate synthase (230 aa).

Residues 1-217 enclose the ThyX domain; it reads MEIKVLEKGF…PVTYEAFLNF (217 aa). FAD-binding positions include S55, 78–80, and E86; that span reads RHR. Residues 75–78, 86–90, and R156 contribute to the dUMP site; these read QLVR and ERSGR. The ThyX motif signature appears at 78–88; the sequence is RHRIASINERS. FAD-binding positions include 172 to 174 and N178; that span reads NAR. R183 contributes to the dUMP binding site. The Involved in ionization of N3 of dUMP, leading to its activation role is filled by R183.

The protein belongs to the thymidylate synthase ThyX family. Homotetramer. The cofactor is FAD.

The catalysed reaction is dUMP + (6R)-5,10-methylene-5,6,7,8-tetrahydrofolate + NADPH + H(+) = dTMP + (6S)-5,6,7,8-tetrahydrofolate + NADP(+). It functions in the pathway pyrimidine metabolism; dTTP biosynthesis. Its function is as follows. Catalyzes the reductive methylation of 2'-deoxyuridine-5'-monophosphate (dUMP) to 2'-deoxythymidine-5'-monophosphate (dTMP) while utilizing 5,10-methylenetetrahydrofolate (mTHF) as the methyl donor, and NADPH and FADH(2) as the reductant. This Kosmotoga olearia (strain ATCC BAA-1733 / DSM 21960 / TBF 19.5.1) protein is Flavin-dependent thymidylate synthase.